We begin with the raw amino-acid sequence, 629 residues long: 1-deoxy-D-xylulose-5-phosphate synthase (629 aa).

Thiamine diphosphate contacts are provided by residues histidine 72 and 113–115 (GHA). Aspartate 144 lines the Mg(2+) pocket. Residues 145–146 (GA), asparagine 174, tyrosine 287, and glutamate 370 each bind thiamine diphosphate. Residue asparagine 174 coordinates Mg(2+).

Belongs to the transketolase family. DXPS subfamily. Homodimer. It depends on Mg(2+) as a cofactor. Thiamine diphosphate is required as a cofactor.

The enzyme catalyses D-glyceraldehyde 3-phosphate + pyruvate + H(+) = 1-deoxy-D-xylulose 5-phosphate + CO2. Its pathway is metabolic intermediate biosynthesis; 1-deoxy-D-xylulose 5-phosphate biosynthesis; 1-deoxy-D-xylulose 5-phosphate from D-glyceraldehyde 3-phosphate and pyruvate: step 1/1. In terms of biological role, catalyzes the acyloin condensation reaction between C atoms 2 and 3 of pyruvate and glyceraldehyde 3-phosphate to yield 1-deoxy-D-xylulose-5-phosphate (DXP). The chain is 1-deoxy-D-xylulose-5-phosphate synthase from Prochlorococcus marinus (strain MIT 9215).